Reading from the N-terminus, the 166-residue chain is MDSGIYETPINYKKSNVSAVSVNNTIFVTGGLFINNSNSTIVVNNMEKLDIYKDKQWSIIEMPMARVYHGIDSTFGMLYFAGGLSVTEQYGNLEKNNEISCYNPRTNKWFDISYTIYKISISSLCKLNNVFYVFSKDIGYVEKYDGAWKLVHDRLPAIKALSTSPY.

2 Kelch repeats span residues 25–76 and 77–129; these read TIFV…STFG and MLYF…KLNN.

Belongs to the poxviruses Kelch family.

The sequence is that of Kelch repeat protein B10 from Oryctolagus cuniculus (Rabbit).